Reading from the N-terminus, the 361-residue chain is Cysteine-rich with EGF-like domain protein 2-A (361 aa).

A signal peptide spans 1–24 (MNGSRALHLSAWLLLCLLCSAAVA). Positions 134–176 (DCLACLGGSERPCHGNGFCNGDGTRSGDGLCRCEAEYTGPFCL) constitute an EGF-like 1 domain. 3 cysteine pairs are disulfide-bonded: cysteine 138/cysteine 152, cysteine 146/cysteine 164, and cysteine 166/cysteine 175. N-linked (GlcNAc...) asparagine glycosylation occurs at asparagine 188. FU repeat units lie at residues 191–238 (YSLC…EESP) and 251–298 (SFLC…SEQV). The EGF-like 2; calcium-binding domain occupies 288 to 329 (DVDECDASEQVCSRENETCLNTAGSYKCTCSEGFEDKEGNCV). 3 disulfides stabilise this stretch: cysteine 292-cysteine 306, cysteine 299-cysteine 315, and cysteine 317-cysteine 328. Asparagine 303 carries N-linked (GlcNAc...) asparagine glycosylation. Residues 341–361 (DGEMGTSASDINISNTAHEDL) form a disordered region. A compositionally biased stretch (polar residues) spans 346 to 361 (TSASDINISNTAHEDL). N-linked (GlcNAc...) asparagine glycosylation is present at asparagine 352.

Belongs to the CRELD family.

The protein localises to the secreted. Its subcellular location is the endoplasmic reticulum. In terms of biological role, possible role in neuronal acetylcholine receptor transport. The protein is Cysteine-rich with EGF-like domain protein 2-A (creld2-a) of Xenopus laevis (African clawed frog).